The sequence spans 367 residues: DNA replication and repair protein RecF (367 aa).

Residue 30–37 coordinates ATP; sequence GSNGSGKT.

It belongs to the RecF family.

The protein localises to the cytoplasm. Its function is as follows. The RecF protein is involved in DNA metabolism; it is required for DNA replication and normal SOS inducibility. RecF binds preferentially to single-stranded, linear DNA. It also seems to bind ATP. The protein is DNA replication and repair protein RecF of Pseudomonas putida (strain ATCC 700007 / DSM 6899 / JCM 31910 / BCRC 17059 / LMG 24140 / F1).